A 242-amino-acid polypeptide reads, in one-letter code: Protein fmp-52, mitochondrial (242 aa).

The transit peptide at 1–87 (MSTSTPTSTA…VISSLGTTRV (87 aa)) directs the protein to the mitochondrion. The segment at 33 to 58 (SSQVQTISRRAPANPTNSSRLSPTVN) is disordered. Over residues 35–58 (QVQTISRRAPANPTNSSRLSPTVN) the composition is skewed to polar residues.

It belongs to the FMP52 family.

It localises to the mitochondrion outer membrane. This is Protein fmp-52, mitochondrial (fmp-52) from Neurospora crassa (strain ATCC 24698 / 74-OR23-1A / CBS 708.71 / DSM 1257 / FGSC 987).